Here is a 379-residue protein sequence, read N- to C-terminus: Fucose-specific lectin g276 (379 aa).

Glutamate 126 contacts alpha-L-fucose. The beta-L-fucose site is built by glutamate 126, arginine 163, and tryptophan 185. Alpha-L-fucose-binding residues include tryptophan 185, arginine 222, and glutamate 234. 2 residues coordinate beta-L-fucose: tryptophan 242 and glutamate 282. Tryptophan 289 contributes to the alpha-L-fucose binding site.

Belongs to the fungal fucose-specific lectin family.

Lectin that specifically binds to L-fucose. Is associated with the morphogenesis of the fungus, and plays a role in the formation of the constricting rings involved in nematode-trapping. The chain is Fucose-specific lectin g276 from Arthrobotrys oligospora (strain ATCC 24927 / CBS 115.81 / DSM 1491) (Nematode-trapping fungus).